Here is an 85-residue protein sequence, read N- to C-terminus: U4-theraphotoxin-Hhn1a (85 aa).

The first 22 residues, 1 to 22 (MKMTLIAILTCAAVLVLHITAA), serve as a signal peptide directing secretion. The propeptide occupies 23 to 48 (EELEAESQLMEVGMPDTELEAVDEER). Intrachain disulfides connect C52–C66, C56–C77, and C71–C82.

This sequence belongs to the neurotoxin 12 (Hwtx-2) family. 02 (Hwtx-2) subfamily. In terms of assembly, monomer. Expressed by the venom gland.

It localises to the secreted. In terms of biological role, neurotoxin active on both insects and mammals. The sequence is that of U4-theraphotoxin-Hhn1a from Cyriopagopus hainanus (Chinese bird spider).